The chain runs to 168 residues: Small ribosomal subunit protein uS5 (168 aa).

The 64-residue stretch at 14 to 77 (FEERVVSINR…EAAKKNLITV (64 aa)) folds into the S5 DRBM domain.

This sequence belongs to the universal ribosomal protein uS5 family. In terms of assembly, part of the 30S ribosomal subunit. Contacts proteins S4 and S8.

In terms of biological role, with S4 and S12 plays an important role in translational accuracy. Functionally, located at the back of the 30S subunit body where it stabilizes the conformation of the head with respect to the body. This chain is Small ribosomal subunit protein uS5, found in Lactococcus lactis subsp. lactis (strain IL1403) (Streptococcus lactis).